Reading from the N-terminus, the 217-residue chain is Adenosylcobinamide-GDP ribazoletransferase (217 aa).

5 helical membrane-spanning segments follow: residues 6-26 (ALLS…FKCA), 39-61 (GPAA…LLLM), 95-115 (GTGG…STAS), 116-136 (PLQL…VAAF), and 162-182 (ALAV…AVAL).

It belongs to the CobS family. Mg(2+) is required as a cofactor.

It is found in the cell membrane. It catalyses the reaction alpha-ribazole + adenosylcob(III)inamide-GDP = adenosylcob(III)alamin + GMP + H(+). The catalysed reaction is alpha-ribazole 5'-phosphate + adenosylcob(III)inamide-GDP = adenosylcob(III)alamin 5'-phosphate + GMP + H(+). It participates in cofactor biosynthesis; adenosylcobalamin biosynthesis; adenosylcobalamin from cob(II)yrinate a,c-diamide: step 7/7. In terms of biological role, joins adenosylcobinamide-GDP and alpha-ribazole to generate adenosylcobalamin (Ado-cobalamin). Also synthesizes adenosylcobalamin 5'-phosphate from adenosylcobinamide-GDP and alpha-ribazole 5'-phosphate. This Pyrobaculum calidifontis (strain DSM 21063 / JCM 11548 / VA1) protein is Adenosylcobinamide-GDP ribazoletransferase.